We begin with the raw amino-acid sequence, 309 residues long: Protein FdhE (309 aa).

This sequence belongs to the FdhE family.

The protein localises to the cytoplasm. Its function is as follows. Necessary for formate dehydrogenase activity. In Escherichia coli O45:K1 (strain S88 / ExPEC), this protein is Protein FdhE.